The following is a 199-amino-acid chain: Tegument protein UL14 homolog (199 aa).

Over residues Thr-176 to Asn-191 the composition is skewed to polar residues. The interval Thr-176–Val-199 is disordered.

Belongs to the alphaherpesvirinae HHV-1 UL14 protein family.

The protein resides in the virion tegument. Its subcellular location is the host cytoplasm. It localises to the host nucleus. Contributes to the nuclear transport of the viral transcriptional activator VP16 homolog during the early phase of infection. Therefore, participates indirectly in the regulation of the immediate-early gene expression. Additionally, seems to be important for efficient nuclear targeting of capsids. In Varicella-zoster virus (strain Dumas) (HHV-3), this protein is Tegument protein UL14 homolog.